A 415-amino-acid chain; its full sequence is Lupus La protein homolog (415 aa).

The 93-residue stretch at 7-99 (NEKMAALEAK…RRSPSRPLPE (93 aa)) folds into the HTH La-type RNA-binding domain. A phosphoserine mark is found at serine 92 and serine 94. Positions 111-187 (RSVYIKGFPT…TNLLILFKED (77 aa)) constitute an RRM domain. An N6-acetyllysine modification is found at lysine 116. Threonine 120 is modified (phosphothreonine). Lysine 128 and lysine 327 each carry N6-acetyllysine. The region spanning 226–343 (EGKMGCLLKF…HAARRFKGSH (118 aa)) is the xRRM domain. The segment at 323 to 415 (ESLNKWKSKG…KKRENGARDK (93 aa)) is disordered. The span at 328–341 (WKSKGGHAARRFKG) shows a compositional bias: basic residues. Position 356 is an N6-acetyllysine (lysine 356). A Phosphothreonine modification is found at threonine 377. A compositionally biased stretch (basic and acidic residues) spans 377–415 (TRFDDDDHRRGPVKRGIDGRDREEPASKHKKRENGARDK).

Interacts with DDX15. May interact with RUFY1. In terms of processing, phosphorylated.

Its subcellular location is the nucleus. In terms of biological role, binds to the 3' poly(U) terminus of nascent RNA polymerase III transcripts, protecting them from exonuclease digestion and facilitating their folding and maturation. This Rattus norvegicus (Rat) protein is Lupus La protein homolog (Ssb).